We begin with the raw amino-acid sequence, 66 residues long: FMRFamide-like neuropeptide 21 (66 aa).

The signal sequence occupies residues Met1–Ala16.

The protein belongs to the FARP (FMRFamide related peptide) family. In terms of processing, may be processed by convertase egl-3. In terms of tissue distribution, expressed in the ADL, ASE and ASH sensory neurons, the URA motor neurons and the MC, M2 and M4 pharyngeal neurons.

The protein resides in the secreted. Its function is as follows. FMRFamide-like neuropeptide. Involved in modulating locomotion quiescence during the sleep-like state called lethargus which occurs during molting between larval and adult stages, acting via the G-protein coupled receptor npr-1. Plays a role in modulating social and feeding behavior. Ligand to G-protein coupled receptor npr-1. The chain is FMRFamide-like neuropeptide 21 from Caenorhabditis elegans.